The primary structure comprises 278 residues: Polyamine aminopropyltransferase (278 aa).

One can recognise a PABS domain in the interval 5 to 238 (ELWFTEQQTP…GLWSFTMGSK (234 aa)). S-methyl-5'-thioadenosine is bound at residue glutamine 34. Spermidine contacts are provided by histidine 65 and aspartate 89. Residues glutamate 109 and 140-141 (DG) contribute to the S-methyl-5'-thioadenosine site. Aspartate 158 acts as the Proton acceptor in catalysis. 158-161 (DSTD) serves as a coordination point for spermidine. Proline 165 serves as a coordination point for S-methyl-5'-thioadenosine.

Belongs to the spermidine/spermine synthase family. As to quaternary structure, homodimer or homotetramer.

Its subcellular location is the cytoplasm. It catalyses the reaction S-adenosyl 3-(methylsulfanyl)propylamine + putrescine = S-methyl-5'-thioadenosine + spermidine + H(+). The protein operates within amine and polyamine biosynthesis; spermidine biosynthesis; spermidine from putrescine: step 1/1. Its function is as follows. Catalyzes the irreversible transfer of a propylamine group from the amino donor S-adenosylmethioninamine (decarboxy-AdoMet) to putrescine (1,4-diaminobutane) to yield spermidine. In Caldicellulosiruptor saccharolyticus (strain ATCC 43494 / DSM 8903 / Tp8T 6331), this protein is Polyamine aminopropyltransferase.